The sequence spans 161 residues: MTIALFPGSFDPITNGHVETAKKAAQMFDKVFVVAMTNTSKKYLFTAEERTAFAKDALKNISNIEVLEKPEELTVKLAHELKANVIVRGVRNSADFLYEQEIAGINKRLAPDINTVLLFSSPDNSFVASSMIKELARFDEDVSQFLPIKAAKALRKKLRHE.

Ser9 is a substrate binding site. ATP contacts are provided by residues Ser9 to Phe10 and His17. Substrate-binding residues include Lys41, Thr74, and Arg88. ATP-binding positions include Gly89 to Arg91, Glu99, and Asn124 to Ser130.

This sequence belongs to the bacterial CoaD family. Homohexamer. It depends on Mg(2+) as a cofactor.

Its subcellular location is the cytoplasm. The catalysed reaction is (R)-4'-phosphopantetheine + ATP + H(+) = 3'-dephospho-CoA + diphosphate. The protein operates within cofactor biosynthesis; coenzyme A biosynthesis; CoA from (R)-pantothenate: step 4/5. Its function is as follows. Reversibly transfers an adenylyl group from ATP to 4'-phosphopantetheine, yielding dephospho-CoA (dPCoA) and pyrophosphate. In Lactobacillus acidophilus (strain ATCC 700396 / NCK56 / N2 / NCFM), this protein is Phosphopantetheine adenylyltransferase.